An 881-amino-acid polypeptide reads, in one-letter code: Valine--tRNA ligase (881 aa).

Positions P49 to H59 match the 'HIGH' region motif. The 'KMSKS' region signature appears at K526–S530. K529 contacts ATP. Positions L810–K881 form a coiled coil.

The protein belongs to the class-I aminoacyl-tRNA synthetase family. ValS type 1 subfamily. As to quaternary structure, monomer.

The protein localises to the cytoplasm. It carries out the reaction tRNA(Val) + L-valine + ATP = L-valyl-tRNA(Val) + AMP + diphosphate. Its function is as follows. Catalyzes the attachment of valine to tRNA(Val). As ValRS can inadvertently accommodate and process structurally similar amino acids such as threonine, to avoid such errors, it has a 'posttransfer' editing activity that hydrolyzes mischarged Thr-tRNA(Val) in a tRNA-dependent manner. The sequence is that of Valine--tRNA ligase from Bacillus cereus (strain ATCC 10987 / NRS 248).